We begin with the raw amino-acid sequence, 120 residues long: uncharacterized protein (120 aa).

A Nudix hydrolase domain is found at 29-120 (QRQAAVLVPI…QVTPVVGIIP (92 aa)). Residues 67 to 89 (GAVDNSDATLIAAALREAQEEVA) carry the Nudix box motif. Mg(2+) contacts are provided by Glu-83 and Glu-87.

This sequence belongs to the Nudix hydrolase family. PCD1 subfamily. Mn(2+) is required as a cofactor. It depends on Mg(2+) as a cofactor.

Probably mediates the hydrolysis of some nucleoside diphosphate derivatives. This is an uncharacterized protein from Klebsiella aerogenes (Enterobacter aerogenes).